The following is a 347-amino-acid chain: Virulence plasmid protein pGP2-D (347 aa).

The protein is Virulence plasmid protein pGP2-D of Chlamydia psittaci (Chlamydophila psittaci).